Consider the following 198-residue polypeptide: Single-stranded DNA cytosine deaminase (198 aa).

Positions 1-30 (MDSLLMKQRKFLYHFKNVRWAKGRHETYLC) match the Bipartite nuclear localization signal motif. Residues 2 to 26 (DSLLMKQRKFLYHFKNVRWAKGRHE) are interaction with SUPT6H. Residues 23-129 (GRHETYLCYV…KAEPEGLRRL (107 aa)) enclose the CMP/dCMP-type deaminase domain. Position 27 is a phosphothreonine; by PKA (Thr27). A Phosphoserine; by PKA modification is found at Ser38. Residues 39–42 (ATSF) form an important for interaction with CTNNBL1 region. His56 is a binding site for Zn(2+). The active-site Proton donor is Glu58. Residues Cys87 and Cys90 each coordinate Zn(2+). The tract at residues 88 to 116 (YDCARHVADFLRGYPNLSLRIFAARLYFC) is required for interaction with RNF126. The Nuclear export signal signature appears at 183-198 (LYEVDDLRDAFRTLGL).

It belongs to the cytidine and deoxycytidylate deaminase family. Interacts with CTNNBL1; the interaction is important for the immunoglobulin switch activity of AICDA. Interacts (via its NLS) with KPNA1. Interacts with PKA/PRKACA and PRKAR1A/PKR1. Interacts with SUPT6H, TRIM28 and NCL. Directly interacts with MCM3AP; this interaction may favor AICDA recruitment to immunoglobulin variable region genes, hence promoting somatic hypermutations. Zn(2+) is required as a cofactor. Ser-38 is the major site whereas Thr-27 is the minor site of phosphorylation. Phosphorylation regulates its class-switch recombination activity. In terms of processing, probably monoubiquitinated on several residues by RNF126. Expressed in thymus, lung, spleen, kidney, small intestine, lymph node and tonsil.

It is found in the nucleus. The protein resides in the cytoplasm. The enzyme catalyses a 2'-deoxycytidine in single-stranded DNA + H2O + H(+) = a 2'-deoxyuridine in single-stranded DNA + NH4(+). Functionally, single-stranded DNA-specific cytidine deaminase. Involved in somatic hypermutation (SHM), gene conversion, and class-switch recombination (CSR) in B-lymphocytes by deaminating C to U during transcription of Ig-variable (V) and Ig-switch (S) region DNA. Required for several crucial steps of B-cell terminal differentiation necessary for efficient antibody responses. May also play a role in the epigenetic regulation of gene expression by participating in DNA demethylation. The sequence is that of Single-stranded DNA cytosine deaminase (AICDA) from Canis lupus familiaris (Dog).